The primary structure comprises 471 residues: ATP synthase subunit beta (471 aa).

156 to 163 (GGAGVGKT) serves as a coordination point for ATP.

Belongs to the ATPase alpha/beta chains family. In terms of assembly, F-type ATPases have 2 components, CF(1) - the catalytic core - and CF(0) - the membrane proton channel. CF(1) has five subunits: alpha(3), beta(3), gamma(1), delta(1), epsilon(1). CF(0) has three main subunits: a(1), b(2) and c(9-12). The alpha and beta chains form an alternating ring which encloses part of the gamma chain. CF(1) is attached to CF(0) by a central stalk formed by the gamma and epsilon chains, while a peripheral stalk is formed by the delta and b chains.

The protein localises to the cell membrane. The enzyme catalyses ATP + H2O + 4 H(+)(in) = ADP + phosphate + 5 H(+)(out). Functionally, produces ATP from ADP in the presence of a proton gradient across the membrane. The catalytic sites are hosted primarily by the beta subunits. The sequence is that of ATP synthase subunit beta from Lawsonia intracellularis (strain PHE/MN1-00).